Reading from the N-terminus, the 229-residue chain is Ribonuclease 3 (229 aa).

The 126-residue stretch at 7–132 (ISAFCDRIGH…VIAAVYRDAG (126 aa)) folds into the RNase III domain. A Mg(2+)-binding site is contributed by glutamate 45. Aspartate 49 is a catalytic residue. Positions 118 and 121 each coordinate Mg(2+). Glutamate 121 is an active-site residue. Residues 157–226 (DPKTALQEWA…AKALLAQVES (70 aa)) form the DRBM domain.

Belongs to the ribonuclease III family. As to quaternary structure, homodimer. Mg(2+) is required as a cofactor.

The protein localises to the cytoplasm. It catalyses the reaction Endonucleolytic cleavage to 5'-phosphomonoester.. Its function is as follows. Digests double-stranded RNA. Involved in the processing of primary rRNA transcript to yield the immediate precursors to the large and small rRNAs (23S and 16S). Processes some mRNAs, and tRNAs when they are encoded in the rRNA operon. Processes pre-crRNA and tracrRNA of type II CRISPR loci if present in the organism. This is Ribonuclease 3 from Dinoroseobacter shibae (strain DSM 16493 / NCIMB 14021 / DFL 12).